The primary structure comprises 223 residues: Riboflavin kinase (223 aa).

The tract at residues 1–89 is unknown; the sequence is MHRINALKHL…KHIFCGDEDK (89 aa). A riboflavin kinase region spans residues 90-223; sequence VELYGNVITG…IMIEDRSACE (134 aa). Position 99 to 104 (99 to 104) interacts with CDP; it reads GLGEGQ. Mg(2+)-binding residues include T128 and N130. Residues S185 and E193 each coordinate FMN. 198–201 contacts CDP; it reads VHLR.

The protein belongs to the archaeal riboflavin kinase family. Mg(2+) serves as cofactor.

The enzyme catalyses riboflavin + CTP = CDP + FMN + H(+). It functions in the pathway cofactor biosynthesis; FMN biosynthesis; FMN from riboflavin (CTP route): step 1/1. Catalyzes the CTP-dependent phosphorylation of riboflavin (vitamin B2) to form flavin mononucleotide (FMN). The sequence is that of Riboflavin kinase (ribK) from Methanococcoides burtonii (strain DSM 6242 / NBRC 107633 / OCM 468 / ACE-M).